Consider the following 1390-residue polypeptide: Nuclear pore complex protein 14 (1390 aa).

2 stretches are compositionally biased toward polar residues: residues 434-455 and 464-521; these read SQKP…STVF and LKSS…STPK. Disordered regions lie at residues 434–530, 851–874, and 985–1118; these read SQKP…KISD, PSSS…TQAD, and QEIE…SKAA. The span at 851–864 shows a compositional bias: low complexity; the sequence is PSSSLFSASPSTPS. The segment covering 986–1033 has biased composition (basic and acidic residues); sequence EIEKASSKVETLNKTEEVKDEKSENEVTPDLKSEEPKSLETKVKEEPK. Residues 1051-1071 show a composition bias toward low complexity; that stretch reads KTPSFSFNSTTTPKSTSSTSS. The stretch at 1073-1074 is repeat 1; that stretch reads FG. A 17 X 2 AA repeats of F-G region spans residues 1073 to 1373; it reads FGGGLKTQTP…TPAPTSSVFG (301 aa). Positions 1078–1090 are enriched in polar residues; it reads KTQTPSSSNSTNI. Repeat unit 2 spans residues 1091-1092; sequence FG. Residues 1095-1109 are compositionally biased toward low complexity; it reads TTTTATPTPASNTSS. 6 consecutive repeat copies span residues 1111–1112, 1122–1123, 1125–1126, 1163–1164, 1166–1167, and 1178–1179. Residues 1183–1280 form a disordered region; sequence TAPTVPNVDD…QASAPATGTS (98 aa). The span at 1201 to 1210 shows a compositional bias: gly residues; sequence NGGGSGGFMS. Over residues 1231 to 1243 the composition is skewed to low complexity; sequence TSTGTSASSSSWL. Repeat unit 9 spans residues 1244–1245; that stretch reads FG. Residues 1264 to 1280 are compositionally biased toward low complexity; the sequence is TAGSSAQQASAPATGTS. A run of 8 repeats spans residues 1283 to 1284, 1289 to 1290, 1295 to 1296, 1300 to 1301, 1315 to 1316, 1344 to 1345, 1357 to 1358, and 1372 to 1373. Polar residues predominate over residues 1342 to 1371; it reads SLFGGGATPQTNTSIFGGGANTTPAPTSSV. Residues 1342–1390 form a disordered region; the sequence is SLFGGGATPQTNTSIFGGGANTTPAPTSSVFGGGASANANKPTSFTSWR. Residues 1378–1390 show a composition bias toward polar residues; sequence ANANKPTSFTSWR.

As to quaternary structure, interacts with caspase ced-3 (via propeptide); the interaction tethers ced-3 to the nuclear membrane and prevents its autoprocessing in absence of ced-4.

It is found in the nucleus. Its subcellular location is the nuclear pore complex. The protein localises to the nucleus membrane. May serve as a docking site in the receptor-mediated import of substrates across the nuclear pore complex. Plays a role in apoptosis by tethering caspase ced-3 to the nuclear membrane preventing its autoprocessing in absence of ced-4. The sequence is that of Nuclear pore complex protein 14 from Caenorhabditis elegans.